Consider the following 331-residue polypeptide: ADP,ATP carrier protein 1, mitochondrial (331 aa).

Solcar repeat units follow at residues 29-122 (KNFA…FKRM), 134-226 (KWFG…LKPV), and 238-320 (ASFA…LQIL). 5 helical membrane passes run 31 to 58 (FAID…VKLL), 99 to 123 (TANV…KRMF), 132 to 152 (YWKW…SSLF), 202 to 223 (FNIS…YDSL), and 237 to 257 (FASF…SYPI). 2 residues coordinate ADP: arginine 104 and lysine 116. ADP is bound at residue arginine 261. The tract at residues 261–266 (RRRMMM) is important for transport activity. Residues 261 to 266 (RRRMMM) carry the Nucleotide carrier signature motif motif. Residues 297–317 (AGANILRAIAGAGVLSGYDQL) traverse the membrane as a helical segment.

The protein belongs to the mitochondrial carrier (TC 2.A.29) family. Monomer.

The protein resides in the mitochondrion inner membrane. It carries out the reaction ADP(in) + ATP(out) = ADP(out) + ATP(in). Its activity is regulated as follows. The matrix-open state (m-state) is inhibited by the membrane-permeable bongkrekic acid (BKA). The cytoplasmic-open state (c-state) is inhibited by the membrane-impermeable toxic inhibitor carboxyatractyloside (CATR). ADP:ATP antiporter that mediates import of ADP into the mitochondrial matrix for ATP synthesis, and export of ATP out to fuel the cell. Cycles between the cytoplasmic-open state (c-state) and the matrix-open state (m-state): operates by the alternating access mechanism with a single substrate-binding site intermittently exposed to either the cytosolic (c-state) or matrix (m-state) side of the inner mitochondrial membrane. The polypeptide is ADP,ATP carrier protein 1, mitochondrial (ANT-G1) (Triticum aestivum (Wheat)).